A 341-amino-acid chain; its full sequence is Fructose-1,6-bisphosphatase, cytosolic (341 aa).

Residues Glu-71, Glu-100, Asp-121, Leu-123, and Asp-124 each contribute to the Mg(2+) site. Substrate is bound by residues 124-127 (DGCS), Asn-215, Tyr-247, Tyr-267, and Lys-277. Glu-283 contributes to the Mg(2+) binding site.

The protein belongs to the FBPase class 1 family. It depends on Mg(2+) as a cofactor.

The protein resides in the cytoplasm. The catalysed reaction is beta-D-fructose 1,6-bisphosphate + H2O = beta-D-fructose 6-phosphate + phosphate. In Beta vulgaris (Sugar beet), this protein is Fructose-1,6-bisphosphatase, cytosolic.